The primary structure comprises 432 residues: MKKITFIGAGSTIFAKNVLGDCLLTEALNGFEFALYDIDPKRLQESQLMLENLRDRYNPSVAINSYDDRKLALQNAGYVINAIQVGGYKPSTVIDFEIPKRYGLRQTIADTVGIGGIFRSLRTIPVLFDIAKDMEEMCPDAWFLNYTNPMATLTGAMLRYTNIKTIGLCHSVQVCTKDLFKALGMEHDGIEERIAGINHMAWLLEVKKDGTDLYPEIKRRAKEKQKTKHHDMVRFELMDKFGYYVTESSEHNAEYHPYFIKRNYPELISELQIPLDEYPRRCVKQIENWEKMRDDIVNNKNLTHERSKEYGSRIIEAMETNEPFTFGGNVLNTGLITNLPSKAVVEVTCVADRKKITPCFAGELPEQLAALNRTNINTQLMTIEAAVTRKKEAVYQAAMLDPHTSAELSMKDIISMCDDLFAAHGDWLPEYK.

2–68 (KKITFIGAGS…PSVAINSYDD (67 aa)) contacts NAD(+). Asn148 is a substrate binding site. Residue Cys169 coordinates Mn(2+). His170 functions as the Proton donor in the catalytic mechanism. Residue His199 participates in Mn(2+) binding.

It belongs to the glycosyl hydrolase 4 family. In terms of assembly, homodimer. The cofactor is Mn(2+). Requires NAD(+) as cofactor.

Its subcellular location is the cytoplasm. The enzyme catalyses Hydrolysis of terminal, non-reducing alpha-D-galactose residues in alpha-D-galactosides, including galactose oligosaccharides, galactomannans and galactolipids.. Catalyzes the hydrolysis of melibiose and alpha-galactosides of the raffinose family of oligosaccharides (RFOs) such as raffinose and stachyose. Cannot act on polymeric substrates such as locust bean gum. The sequence is that of Alpha-galactosidase from Bacillus subtilis (strain 168).